The following is a 537-amino-acid chain: Putative cysteine ligase BshC (537 aa).

A coiled-coil region spans residues 422-450 (IEKVEGMIEQQRRLNKDLLDEVAGNQNNI).

The protein belongs to the BshC family.

In terms of biological role, involved in bacillithiol (BSH) biosynthesis. May catalyze the last step of the pathway, the addition of cysteine to glucosamine malate (GlcN-Mal) to generate BSH. The chain is Putative cysteine ligase BshC from Staphylococcus aureus (strain COL).